The following is a 607-amino-acid chain: tRNA uridine 5-carboxymethylaminomethyl modification enzyme MnmG (607 aa).

FAD contacts are provided by residues 11 to 16, Val-123, and Ser-178; that span reads GGGHAG. An NAD(+)-binding site is contributed by 270–284; that stretch reads GPRYCPSVEDKIVRF. An FAD-binding site is contributed by Gln-367.

Belongs to the MnmG family. In terms of assembly, homodimer. Heterotetramer of two MnmE and two MnmG subunits. FAD serves as cofactor.

The protein resides in the cytoplasm. Its function is as follows. NAD-binding protein involved in the addition of a carboxymethylaminomethyl (cmnm) group at the wobble position (U34) of certain tRNAs, forming tRNA-cmnm(5)s(2)U34. The polypeptide is tRNA uridine 5-carboxymethylaminomethyl modification enzyme MnmG (Metamycoplasma arthritidis (strain 158L3-1) (Mycoplasma arthritidis)).